The chain runs to 665 residues: ELMO family protein LMO1 (665 aa).

Forms an active heterodimer with DCK1.

It is found in the cytoplasm. It localises to the mitochondrion. Functionally, forms a transiant heterodimeric complex with DCK1, that acts as a guanine nucleotide exchange factor (GEF) for the small GTPase RHO5. DCK1, LMO1 and RHO5 relocate to mitochondria upon oxidative stress and trigger cell death. The DCK1/LMO1/RHO5 signaling module mediates mitochondrial turnover under nitrogen starvation conditions via mitophagy. The DCK1/LMO1/RHO5 signaling module also plays a role in cell wall integrity signaling. The protein is ELMO family protein LMO1 of Saccharomyces cerevisiae (strain ATCC 204508 / S288c) (Baker's yeast).